Consider the following 347-residue polypeptide: Phosphoribosylformylglycinamidine cyclo-ligase (347 aa).

The protein belongs to the AIR synthase family.

The protein localises to the cytoplasm. The enzyme catalyses 2-formamido-N(1)-(5-O-phospho-beta-D-ribosyl)acetamidine + ATP = 5-amino-1-(5-phospho-beta-D-ribosyl)imidazole + ADP + phosphate + H(+). The protein operates within purine metabolism; IMP biosynthesis via de novo pathway; 5-amino-1-(5-phospho-D-ribosyl)imidazole from N(2)-formyl-N(1)-(5-phospho-D-ribosyl)glycinamide: step 2/2. The polypeptide is Phosphoribosylformylglycinamidine cyclo-ligase (Prochlorococcus marinus (strain AS9601)).